The sequence spans 331 residues: Adenosine deaminase (331 aa).

Residues H12 and H14 each contribute to the Zn(2+) site. H14, D16, and G170 together coordinate substrate. Zn(2+) is bound at residue H197. E200 functions as the Proton donor in the catalytic mechanism. Zn(2+) is bound at residue D278. D279 provides a ligand contact to substrate.

This sequence belongs to the metallo-dependent hydrolases superfamily. Adenosine and AMP deaminases family. Adenosine deaminase subfamily. Zn(2+) is required as a cofactor.

The catalysed reaction is adenosine + H2O + H(+) = inosine + NH4(+). The enzyme catalyses 2'-deoxyadenosine + H2O + H(+) = 2'-deoxyinosine + NH4(+). Functionally, catalyzes the hydrolytic deamination of adenosine and 2-deoxyadenosine. The chain is Adenosine deaminase from Shewanella baltica (strain OS185).